Reading from the N-terminus, the 141-residue chain is Hemoglobin subunit alpha (141 aa).

The Globin domain maps to 1 to 141; sequence VLSAADKTNV…VATVLTSKYR (141 aa). S3 carries the post-translational modification Phosphoserine. Residue K7 is modified to N6-succinyllysine. T8 carries the post-translational modification Phosphothreonine. K11 carries the N6-succinyllysine modification. K16 carries the post-translational modification N6-acetyllysine; alternate. The residue at position 16 (K16) is an N6-succinyllysine; alternate. Y24 bears the Phosphotyrosine mark. S35 is subject to Phosphoserine. Residue K40 is modified to N6-succinyllysine. Residue S49 is modified to Phosphoserine. H58 contacts O2. H87 serves as a coordination point for heme b. A Phosphoserine modification is found at S102. Residue T108 is modified to Phosphothreonine. The residue at position 124 (S124) is a Phosphoserine. 2 positions are modified to phosphothreonine: T134 and T137. The residue at position 138 (S138) is a Phosphoserine.

This sequence belongs to the globin family. In terms of assembly, heterotetramer of two alpha chains and two beta chains. Red blood cells.

Its function is as follows. Involved in oxygen transport from the lung to the various peripheral tissues. Hemopressin acts as an antagonist peptide of the cannabinoid receptor CNR1. Hemopressin-binding efficiently blocks cannabinoid receptor CNR1 and subsequent signaling. This chain is Hemoglobin subunit alpha (HBA), found in Ctenodactylus gundi (Northern gundi).